Reading from the N-terminus, the 217-residue chain is Translation initiation factor IF-3 (217 aa).

Positions 179–217 (PRKTPLVKKEEKEAAPTKAVRTIPAPPRPTAAKVAAQQA) are disordered.

The protein belongs to the IF-3 family. In terms of assembly, monomer.

Its subcellular location is the cytoplasm. Functionally, IF-3 binds to the 30S ribosomal subunit and shifts the equilibrium between 70S ribosomes and their 50S and 30S subunits in favor of the free subunits, thus enhancing the availability of 30S subunits on which protein synthesis initiation begins. The chain is Translation initiation factor IF-3 from Parasynechococcus marenigrum (strain WH8102).